We begin with the raw amino-acid sequence, 391 residues long: 3-ketoacyl-CoA thiolase (391 aa).

Cysteine 95 functions as the Acyl-thioester intermediate in the catalytic mechanism. Residues histidine 347 and cysteine 377 each act as proton acceptor in the active site.

It belongs to the thiolase-like superfamily. Thiolase family. As to quaternary structure, heterotetramer of two alpha chains (FadB) and two beta chains (FadA).

The protein localises to the cytoplasm. The catalysed reaction is an acyl-CoA + acetyl-CoA = a 3-oxoacyl-CoA + CoA. It participates in lipid metabolism; fatty acid beta-oxidation. In terms of biological role, catalyzes the final step of fatty acid oxidation in which acetyl-CoA is released and the CoA ester of a fatty acid two carbons shorter is formed. The chain is 3-ketoacyl-CoA thiolase from Pseudomonas fragi.